Reading from the N-terminus, the 240-residue chain is Adiponectin (240 aa).

Residues 1-17 form the signal peptide; the sequence is MLLQGALLLLLALPSHG. Lys-28 is subject to 5-hydroxylysine. A glycan (O-linked (Gal...) hydroxylysine) is linked at Lys-28. Positions 29–100 are disordered; it reads GACAGWMAGI…GTPGRKGEPG (72 aa). Residue Cys-31 is modified to S-(2-succinyl)cysteine. 4-hydroxyproline occurs at positions 39, 42, and 48. The Collagen-like domain occupies 43–102; the sequence is GHNGTPGRDGRDGTPGEKGEKGDPGLVGPKGDTGETGITGIEGPRGFPGTPGRKGEPGES. Residues 50–65 are compositionally biased toward basic and acidic residues; sequence RDGRDGTPGEKGEKGD. 5-hydroxylysine is present on residues Lys-60, Lys-63, and Lys-72. O-linked (Gal...) hydroxylysine glycosylation is found at Lys-60, Lys-63, and Lys-72. Residue Pro-86 is modified to 4-hydroxyproline. A 5-hydroxylysine modification is found at Lys-96. An O-linked (Gal...) hydroxylysine glycan is attached at Lys-96. The 138-residue stretch at 103 to 240 folds into the C1q domain; the sequence is AYVYRSAFSV…GFLLYHNIVE (138 aa).

In terms of assembly, homomultimer. Forms trimers, hexamers and 12- to 18-mers. The trimers (low molecular weight complexes / LMW) are assembled via non-covalent interactions of the collagen-like domains in a triple helix and hydrophobic interactions within the globular C1q domain. Several trimers can associate to form disulfide-linked hexamers (middle molecular weight complexes / MMW) and larger complexes (higher molecular weight / HMW). The HMW-complex assembly is also modulated by the degree of lysine hydroxylation and glycosylation. LMW, MMW and HMW complexes bind to HBEGF, MMW and HMW complexes bind to PDGFB, and HMW complex binds to FGF2. Interacts with CTRP9 via the C1q domain (heterotrimeric complex). Post-translationally, HMW complexes are more extensively glycosylated than smaller oligomers. Hydroxylation and glycosylation of the lysine residues within the collagen-like domain of adiponectin seem to be critically involved in regulating the formation and/or secretion of HMW complexes and consequently contribute to the insulin-sensitizing activity of adiponectin in hepatocytes. In terms of processing, O-glycosylated. O-linked glycans on hydroxylysine residues consist of Glc-Gal disaccharides bound to the oxygen atom of post-translationally added hydroxyl groups. O-linked glycosylations elsewhere disialylated with the structure Neu5Acalpha2-&gt;8Neu5Acalpha2-&gt;3Gal. Sialylated by alpha 2,8-sialyltransferase III. Desialylated forms are rapidly cleared from the circulation. Not N-glycosylated. Succination of Cys-31 by the Krebs cycle intermediate fumarate, which leads to S-(2-succinyl)cysteine residues, inhibits polymerization and secretion of adiponectin. Adiponectin is a major target for succination in both adipocytes and adipose tissue of diabetic mammals. It was proposed that succination of proteins is a biomarker of mitochondrial stress and accumulation of Krebs cycle intermediates in adipose tissue in diabetes and that succination of adiponectin may contribute to the decrease in plasma adiponectin in diabetes.

It localises to the secreted. Polymerization and secretion of adiponectin is inhibited by succination of cysteine residues by the Krebs cycle intermediate fumarate, which leads to S-(2-succinyl)cysteine residues. Functionally, important adipokine involved in the control of fat metabolism and insulin sensitivity, with direct anti-diabetic, anti-atherogenic and anti-inflammatory activities. Stimulates AMPK phosphorylation and activation in the liver and the skeletal muscle, enhancing glucose utilization and fatty-acid combustion. Antagonizes TNF-alpha by negatively regulating its expression in various tissues such as liver and macrophages, and also by counteracting its effects. Inhibits endothelial NF-kappa-B signaling through a cAMP-dependent pathway. May play a role in cell growth, angiogenesis and tissue remodeling by binding and sequestering various growth factors with distinct binding affinities, depending on the type of complex, LMW, MMW or HMW. The sequence is that of Adiponectin (ADIPOQ) from Bos taurus (Bovine).